The sequence spans 71 residues: MRTLCSLLLICCLLFSYTTPAVGSLKSIGYEAELDHCHTNGGYCVRAICPPSARRPGSCFPEKNPCCKYMK.

The signal sequence occupies residues 1–20; it reads MRTLCSLLLICCLLFSYTTP. 3 disulfide bridges follow: C37-C66, C44-C59, and C49-C67.

It belongs to the beta-defensin family. Kidney, uterus and to a lesser extent in heart.

It localises to the secreted. In terms of biological role, has bactericidal activity. The chain is Beta-defensin 2 (Defb2) from Mus musculus (Mouse).